Reading from the N-terminus, the 241-residue chain is Phosphoribosylaminoimidazole-succinocarboxamide synthase (241 aa).

This sequence belongs to the SAICAR synthetase family.

The enzyme catalyses 5-amino-1-(5-phospho-D-ribosyl)imidazole-4-carboxylate + L-aspartate + ATP = (2S)-2-[5-amino-1-(5-phospho-beta-D-ribosyl)imidazole-4-carboxamido]succinate + ADP + phosphate + 2 H(+). It functions in the pathway purine metabolism; IMP biosynthesis via de novo pathway; 5-amino-1-(5-phospho-D-ribosyl)imidazole-4-carboxamide from 5-amino-1-(5-phospho-D-ribosyl)imidazole-4-carboxylate: step 1/2. This Methanoculleus marisnigri (strain ATCC 35101 / DSM 1498 / JR1) protein is Phosphoribosylaminoimidazole-succinocarboxamide synthase.